Reading from the N-terminus, the 177-residue chain is NAD(P)H-quinone oxidoreductase subunit 6, chloroplastic (177 aa).

5 helical membrane-spanning segments follow: residues 10 to 30 (ILLVSLGSGLIVGGLGVVLLT), 32 to 52 (PIYSAFSSGLVLVCISLFYIP), 61 to 81 (AQLLIYVGAINVLILFAVMFM), 92 to 112 (FWTIGDGFTSVVCTSIFFSLI), and 152 to 172 (FYLPFELISIILLVSLVGAIA).

It belongs to the complex I subunit 6 family. As to quaternary structure, NDH is composed of at least 16 different subunits, 5 of which are encoded in the nucleus.

The protein localises to the plastid. It localises to the chloroplast thylakoid membrane. It catalyses the reaction a plastoquinone + NADH + (n+1) H(+)(in) = a plastoquinol + NAD(+) + n H(+)(out). It carries out the reaction a plastoquinone + NADPH + (n+1) H(+)(in) = a plastoquinol + NADP(+) + n H(+)(out). NDH shuttles electrons from NAD(P)H:plastoquinone, via FMN and iron-sulfur (Fe-S) centers, to quinones in the photosynthetic chain and possibly in a chloroplast respiratory chain. The immediate electron acceptor for the enzyme in this species is believed to be plastoquinone. Couples the redox reaction to proton translocation, and thus conserves the redox energy in a proton gradient. The sequence is that of NAD(P)H-quinone oxidoreductase subunit 6, chloroplastic (ndhG) from Nuphar advena (Common spatterdock).